Consider the following 506-residue polypeptide: Nucleosome assembly protein 1-like 3 (506 aa).

Disordered regions lie at residues 1-95 (MAEA…LGTN) and 157-307 (PTEE…KRED). Residues 35-70 (SSSSSSSTSDSSSSSSTSGSSSGSGSSSSSSGSTSS) show a composition bias toward low complexity. Positions 157–178 (PTEEECEWNSEDEEFSSDEEVQ) are enriched in acidic residues. Over residues 196–296 (PKENPEVKAE…ERLQDSVDLK (101 aa)) the composition is skewed to basic and acidic residues.

This sequence belongs to the nucleosome assembly protein (NAP) family.

It localises to the nucleus. The chain is Nucleosome assembly protein 1-like 3 (NAP1L3) from Homo sapiens (Human).